Here is a 196-residue protein sequence, read N- to C-terminus: RNA pyrophosphohydrolase (196 aa).

Residues 6 to 149 (GYRPNVGIVI…KRDVYRKVMK (144 aa)) enclose the Nudix hydrolase domain. The Nudix box motif lies at 38–59 (GGINDNESAEQAMYRELHEEVG).

This sequence belongs to the Nudix hydrolase family. RppH subfamily. A divalent metal cation is required as a cofactor.

Its function is as follows. Accelerates the degradation of transcripts by removing pyrophosphate from the 5'-end of triphosphorylated RNA, leading to a more labile monophosphorylated state that can stimulate subsequent ribonuclease cleavage. This chain is RNA pyrophosphohydrolase, found in Haemophilus influenzae (strain ATCC 51907 / DSM 11121 / KW20 / Rd).